A 238-amino-acid chain; its full sequence is ATP-dependent dethiobiotin synthetase BioD (238 aa).

Residue 13–18 (EIGKTV) coordinates ATP. Residue Thr-17 participates in Mg(2+) binding. Lys-38 is a catalytic residue. Thr-42 is a substrate binding site. Residues Arg-59 and Glu-111 each contribute to the Mg(2+) site. ATP contacts are provided by residues 111-114 (EGAG), 175-176 (NQ), and 204-206 (PLL).

Belongs to the dethiobiotin synthetase family. In terms of assembly, homodimer. Mg(2+) serves as cofactor.

It is found in the cytoplasm. The enzyme catalyses (7R,8S)-7,8-diammoniononanoate + CO2 + ATP = (4R,5S)-dethiobiotin + ADP + phosphate + 3 H(+). The protein operates within cofactor biosynthesis; biotin biosynthesis; biotin from 7,8-diaminononanoate: step 1/2. Functionally, catalyzes a mechanistically unusual reaction, the ATP-dependent insertion of CO2 between the N7 and N8 nitrogen atoms of 7,8-diaminopelargonic acid (DAPA, also called 7,8-diammoniononanoate) to form a ureido ring. The protein is ATP-dependent dethiobiotin synthetase BioD of Geobacillus kaustophilus (strain HTA426).